The chain runs to 234 residues: Sugar fermentation stimulation protein homolog (234 aa).

It belongs to the SfsA family.

This chain is Sugar fermentation stimulation protein homolog, found in Shewanella pealeana (strain ATCC 700345 / ANG-SQ1).